Consider the following 660-residue polypeptide: MRPRAVLLLLFVLLPMLPAPPAGQPSGRRRGRRNGGAGGGFWGDRVDSQPFALPYIHPTNPFAADVVSQPGAGARPRQPPRPLGSAWRDQSQRPSTAPRRRSAPAGAAPLTAVSPAPDTAPVPDVDSRGAILRRQYNLSTSPLTSSVAAGTNLVLYAAPLNPLLPLQDGTNTHIMATEASNYAQYRVVRATIRYRPLVPNAVGGYAISISFWPQTTTTPTSVDMNSITSTDVRILVQPGIASELVIPSERLHYRNQGWRSVETTGVAEEEATSGLVMLCIHGSPVNSYTNTPYTGALGLLDFALELEFRNLTPGNTNTRVSRYTSTARHRLRRGADGTAELTTTAATRFMKDLHFTGTNGVGEVGRGIALTLFNLADTLLGGLPTELISSAGGQLFYSRPVVSANGEPTVKLYTSVENAQQDKGITIPHDIDLGDSRVVIQDYDNQHEQDRPTPSPAPSRPFSVLRANDVLWLSLTAAEYDQTTYGSSTNPMYVSDTVTLVNVATGAQAVARSLDWSKVTLDGRPLTTIQQYSKTFYVLPLRGKLSFWEAGTTKAGYPYNYNTTASDQILIENAAGHRVAISTYTTSLGAGPTSISAVGVLAPHSALAVLEDTVDYPARAHTFDDFCPECRTLGLQGCAFQSTIAELQRLKMKVGKTRES.

The first 23 residues, 1–23 (MRPRAVLLLLFVLLPMLPAPPAG), serve as a signal peptide directing secretion. 2 disordered regions span residues 19–43 (APPA…GFWG) and 64–125 (ADVV…VPDV). The short motif at 28-33 (RRRGRR) is the Nuclear localization signal element. A compositionally biased stretch (low complexity) spans 93 to 124 (RPSTAPRRRSAPAGAAPLTAVSPAPDTAPVPD). 2 N-linked (GlcNAc...) asparagine; by host glycosylation sites follow: asparagine 137 and asparagine 310. The segment at 368–394 (IALTLFNLADTLLGGLPTELISSAGGQ) is particle formation. Residue asparagine 562 is glycosylated (N-linked (GlcNAc...) asparagine; by host). The interval 585 to 610 (TTSLGAGPTSISAVGVLAPHSALAVL) is oligomerization.

The protein belongs to the hepevirus capsid protein family. Homodimer. As to quaternary structure, self-assembles to form the capsid. The capsid is dominated by dimers that define the 30 morphological units. Interacts with phosphorylated protein ORF3. Interacts with host TMEM134. Interacts with host ASGR1 and ASGR2; these interactions facilitate infection of host hepatocytes. Post-translationally, cleaved by host protease in the N-terminus. N-glycosylated. In terms of processing, not N-glycosylated. The C-terminus of the capsid protein ORF2 is truncated in non-enveloped virions shedded in feces, probably due to host proteases.

It localises to the secreted. Its subcellular location is the virion. The protein resides in the host cytoplasm. The protein localises to the host endoplasmic reticulum. It is found in the host Golgi apparatus. It localises to the host cell surface. Its subcellular location is the host nucleus. In terms of biological role, plays a role in the inhibition of host antibody-mediated neutralization without blocking viral cell entry. Its function is as follows. Forms an icosahedral capsid with a T=1 symmetry and a 34 nm diameter. The capsid is composed of 60 copies linked to each other. Binds to the 5' end of the genomic RNA to mediate genome encapsidation. Binds to heparin surface proteoglycans (HSPGs) to mediate viral entry. Additionally, the interactions with host ASGR1 and ASGR2 facilitate viral infection of hepatocytes. Inhibits IFN production by blocking host TBK1-induced IRF3 phosphorylation. The nuclear form probably modulates host gene expression. In Hepatitis E virus genotype 3 (isolate Swine/United States/swUS1) (HEV-3), this protein is Pro-secreted protein ORF2.